The chain runs to 807 residues: Glycerol-3-phosphate acyltransferase (807 aa).

Residues 308–313 (CHRSHM) carry the HXXXXD motif motif.

Belongs to the GPAT/DAPAT family.

It is found in the cell inner membrane. It catalyses the reaction sn-glycerol 3-phosphate + an acyl-CoA = a 1-acyl-sn-glycero-3-phosphate + CoA. The protein operates within phospholipid metabolism; CDP-diacylglycerol biosynthesis; CDP-diacylglycerol from sn-glycerol 3-phosphate: step 1/3. The polypeptide is Glycerol-3-phosphate acyltransferase (Shewanella loihica (strain ATCC BAA-1088 / PV-4)).